The following is a 97-amino-acid chain: Large ribosomal subunit protein bL27 (97 aa).

The propeptide occupies 1–12 (MLKMNLANLQLF). The interval 14-37 (HKKGGGSTSNGRDSQAKRLGAKAA) is disordered.

This sequence belongs to the bacterial ribosomal protein bL27 family. Post-translationally, the N-terminus is cleaved by ribosomal processing cysteine protease Prp.

In Streptococcus agalactiae serotype III (strain NEM316), this protein is Large ribosomal subunit protein bL27.